A 182-amino-acid chain; its full sequence is ADP-ribosylation factor-like protein 3 (182 aa).

Residue Gly-2 is the site of N-myristoyl glycine attachment. Ser-5 bears the Phosphoserine mark. Residues 24–31 (GLDNAGKT), Thr-48, 67–71 (DIGGQ), Gly-70, 126–129 (NKQD), and 159–161 (SAL) contribute to the GTP site. Residues Thr-31 and Thr-48 each coordinate Mg(2+).

The protein belongs to the small GTPase superfamily. Arf family. As to quaternary structure, found in a complex with ARL3, RP2 and UNC119 (or UNC119B); RP2 induces hydrolysis of GTP ARL3 in the complex, leading to the release of UNC119 (or UNC119B). Interacts with RP2; interaction is direct and stimulated with the activated GTP-bound form of ARL3. Interacts with SYS1. Interacts with ARL2BP; the GTP-bound form interacts with ARL2BP. Microtubule-associated protein. Does not interact with TBCC. Interacts with RP2. Interacts with PDE6D; the interaction occurs specifically with the GTP-bound form of ARL3. Interacts with GGA1; the interaction recruits PKD1:PKD2 complex to trans-Golgi network and is required for ciliary targeting of PKD1:PKD2 complex. Interacts with DNAAF9.

The protein resides in the golgi apparatus membrane. Its subcellular location is the cytoplasm. The protein localises to the cytoskeleton. It localises to the spindle. It is found in the nucleus. The protein resides in the microtubule organizing center. Its subcellular location is the centrosome. The protein localises to the cell projection. It localises to the cilium. Its function is as follows. Small GTP-binding protein which cycles between an inactive GDP-bound and an active GTP-bound form, and the rate of cycling is regulated by guanine nucleotide exchange factors (GEF) and GTPase-activating proteins (GAP). Required for normal cytokinesis and cilia signaling. Required for targeting proteins to the cilium, including myristoylated NPHP3 and prenylated INPP5E. Targets NPHP3 to the ciliary membrane by releasing myristoylated NPHP3 from UNC119B cargo adapter into the cilium. Requires assistance from GTPase-activating proteins (GAPs) like RP2 and PDE6D, in order to cycle between inactive GDP-bound and active GTP-bound forms. Required for PKD1:PKD2 complex targeting from the trans-Golgi network to the cilium. The sequence is that of ADP-ribosylation factor-like protein 3 from Mus musculus (Mouse).